The following is a 161-amino-acid chain: Zinc finger A20 and AN1 domain-containing stress-associated protein 4 (161 aa).

Residues 10–44 (PEGHRLCVNNCGFFGSSATMNLCSNCYGDLCLKQQ) form an A20-type zinc finger. Zn(2+) contacts are provided by cysteine 16, cysteine 20, cysteine 32, and cysteine 35. Basic and acidic residues predominate over residues 76-85 (TTKKTEEKKP). The segment at 76–99 (TTKKTEEKKPIQIPTEQPSPPQRP) is disordered. The segment at 96-142 (PQRPNRCTVCRKRVGLTGFMCRCGTTFCGSHRYPEVHGCTFDFKSAG) adopts an AN1-type zinc-finger fold. The Zn(2+) site is built by cysteine 102, cysteine 105, cysteine 116, cysteine 118, cysteine 123, histidine 126, histidine 132, and cysteine 134.

In terms of biological role, may be involved in environmental stress response. The sequence is that of Zinc finger A20 and AN1 domain-containing stress-associated protein 4 (SAP4) from Arabidopsis thaliana (Mouse-ear cress).